A 321-amino-acid chain; its full sequence is GTP cyclohydrolase FolE2 (321 aa).

The protein belongs to the GTP cyclohydrolase IV family.

The catalysed reaction is GTP + H2O = 7,8-dihydroneopterin 3'-triphosphate + formate + H(+). It participates in cofactor biosynthesis; 7,8-dihydroneopterin triphosphate biosynthesis; 7,8-dihydroneopterin triphosphate from GTP: step 1/1. Functionally, converts GTP to 7,8-dihydroneopterin triphosphate. This chain is GTP cyclohydrolase FolE2, found in Paracoccus denitrificans (strain Pd 1222).